The following is a 205-amino-acid chain: Urease accessory protein UreG (205 aa).

10–17 serves as a coordination point for GTP; sequence GPVGAGKT.

The protein belongs to the SIMIBI class G3E GTPase family. UreG subfamily. Homodimer. UreD, UreF and UreG form a complex that acts as a GTP-hydrolysis-dependent molecular chaperone, activating the urease apoprotein by helping to assemble the nickel containing metallocenter of UreC. The UreE protein probably delivers the nickel.

It is found in the cytoplasm. Its function is as follows. Facilitates the functional incorporation of the urease nickel metallocenter. This process requires GTP hydrolysis, probably effectuated by UreG. This Corynebacterium glutamicum (strain R) protein is Urease accessory protein UreG.